The chain runs to 100 residues: Replication restart protein PriB (100 aa).

In terms of domain architecture, SSB spans 1-100 (MTNRMELSGT…VLHADDIIHI (100 aa)).

This sequence belongs to the PriB family. In terms of assembly, homodimer. Interacts with PriA and DnaT. Component of the replication restart primosome. Primosome assembly occurs via a 'hand-off' mechanism. PriA binds to replication forks, subsequently PriB then DnaT bind; DnaT then displaces ssDNA to generate the helicase loading substrate.

Involved in the restart of stalled replication forks, which reloads the replicative helicase on sites other than the origin of replication; the PriA-PriB pathway is the major replication restart pathway. During primosome assembly it facilitates complex formation between PriA and DnaT on DNA; stabilizes PriA on DNA. Stimulates the DNA unwinding activity of PriA helicase. This Vibrio vulnificus (strain CMCP6) protein is Replication restart protein PriB.